The sequence spans 89 residues: Small ribosomal subunit protein uS15 (89 aa).

Belongs to the universal ribosomal protein uS15 family. As to quaternary structure, part of the 30S ribosomal subunit. Forms a bridge to the 50S subunit in the 70S ribosome, contacting the 23S rRNA.

Its function is as follows. One of the primary rRNA binding proteins, it binds directly to 16S rRNA where it helps nucleate assembly of the platform of the 30S subunit by binding and bridging several RNA helices of the 16S rRNA. In terms of biological role, forms an intersubunit bridge (bridge B4) with the 23S rRNA of the 50S subunit in the ribosome. The sequence is that of Small ribosomal subunit protein uS15 from Salinispora arenicola (strain CNS-205).